Reading from the N-terminus, the 192-residue chain is uncharacterized protein (192 aa).

The Nudix hydrolase domain maps to 29-160; sequence HRQAAVLIPI…PLDIYRRGDS (132 aa). Residues 67–89 carry the Nudix box motif; sequence GAVDDTDASVIAAALREAEEEVA. The Mg(2+) site is built by Glu-83 and Glu-87.

This sequence belongs to the Nudix hydrolase family. PCD1 subfamily. It depends on Mn(2+) as a cofactor. Mg(2+) is required as a cofactor.

In terms of biological role, probably mediates the hydrolysis of some nucleoside diphosphate derivatives. This is an uncharacterized protein from Shigella boydii serotype 4 (strain Sb227).